A 901-amino-acid chain; its full sequence is Protein translocase subunit SecA (901 aa).

Residues Q87, 105 to 109, and D512 each bind ATP; that span reads GEGKT. Residues 868 to 901 are disordered; that stretch reads AALAAQTGERKVGRNDPCPCGSGKKYKQCHGRLQ. 4 residues coordinate Zn(2+): C885, C887, C896, and H897. Residues 891 to 901 show a composition bias toward basic residues; sequence KKYKQCHGRLQ.

Belongs to the SecA family. As to quaternary structure, monomer and homodimer. Part of the essential Sec protein translocation apparatus which comprises SecA, SecYEG and auxiliary proteins SecDF-YajC and YidC. The cofactor is Zn(2+).

It is found in the cell inner membrane. Its subcellular location is the cytoplasm. It carries out the reaction ATP + H2O + cellular proteinSide 1 = ADP + phosphate + cellular proteinSide 2.. Its function is as follows. Part of the Sec protein translocase complex. Interacts with the SecYEG preprotein conducting channel. Has a central role in coupling the hydrolysis of ATP to the transfer of proteins into and across the cell membrane, serving both as a receptor for the preprotein-SecB complex and as an ATP-driven molecular motor driving the stepwise translocation of polypeptide chains across the membrane. The protein is Protein translocase subunit SecA of Escherichia coli O45:K1 (strain S88 / ExPEC).